The primary structure comprises 371 residues: 43 kDa relaxation protein (371 aa).

Disordered stretches follow at residues 1 to 46 (MASY…GNMP), 150 to 172 (KEPDAVAQKRHVSGKHRPNAKNT), 196 to 221 (RVDSRSLKAQGIDREPERHLGAGQVQ), 263 to 291 (SERDTLTLKQELKSEPEQESHSGRTFDFE), and 328 to 371 (IHQE…SFSR). The segment covering 22-42 (YIAREGKYAREKDSDLEHKES) has biased composition (basic and acidic residues). Positions 157–168 (QKRHVSGKHRPN) are enriched in basic residues. Residues 196 to 215 (RVDSRSLKAQGIDREPERHL) are compositionally biased toward basic and acidic residues. Over residues 330–365 (QEMERQRERERLAEKQRQQEKERQRLAEQIRQKPDK) the composition is skewed to basic and acidic residues.

Belongs to the MobA/MobL family.

Its function is as follows. This protein is probably required for relaxation complex formation. This chain is 43 kDa relaxation protein, found in Salmonella typhimurium.